The primary structure comprises 299 residues: Tyrosine recombinase XerC (299 aa).

The Core-binding (CB) domain occupies 1–85 (MQADLDAFLD…ALRGFYRYLL (85 aa)). One can recognise a Tyr recombinase domain in the interval 106-285 (RLPRTLDADR…DFQHLAAVYD (180 aa)). Active-site residues include arginine 146, lysine 170, histidine 237, arginine 240, and histidine 263. Tyrosine 272 (O-(3'-phospho-DNA)-tyrosine intermediate) is an active-site residue.

Belongs to the 'phage' integrase family. XerC subfamily. Forms a cyclic heterotetrameric complex composed of two molecules of XerC and two molecules of XerD.

Its subcellular location is the cytoplasm. Its function is as follows. Site-specific tyrosine recombinase, which acts by catalyzing the cutting and rejoining of the recombining DNA molecules. The XerC-XerD complex is essential to convert dimers of the bacterial chromosome into monomers to permit their segregation at cell division. It also contributes to the segregational stability of plasmids. This Azotobacter vinelandii (strain DJ / ATCC BAA-1303) protein is Tyrosine recombinase XerC.